The following is a 165-amino-acid chain: Secreted acidic protein 2 (165 aa).

Composition is skewed to acidic residues over residues 1-58 (WSXS…DDSG) and 80-102 (ESSD…DAYN). Positions 1–112 (WSXSGDDDDD…DDSQAGELNS (112 aa)) are disordered. A compositionally biased stretch (polar residues) spans 103–112 (DDSQAGELNS).

Component of the acid-insoluble and acid-soluble organic matrix of the aragonitic skeleton (at protein level).

It is found in the secreted. This Acropora millepora (Staghorn coral) protein is Secreted acidic protein 2.